A 267-amino-acid chain; its full sequence is Small ribosomal subunit protein uS3 (267 aa).

Residues 43-111 (IRKEMSKDLE…QVQLNIFEVK (69 aa)) enclose the KH type-2 domain. Residues 216-267 (FEEQQAQQNNRPGRRGGDRRPRRGNRSAAPQAAEAPKAEAPAEAAPAAETKE) form a disordered region. Residues 241 to 267 (RSAAPQAAEAPKAEAPAEAAPAAETKE) show a composition bias toward low complexity.

Belongs to the universal ribosomal protein uS3 family. As to quaternary structure, part of the 30S ribosomal subunit. Forms a tight complex with proteins S10 and S14.

Its function is as follows. Binds the lower part of the 30S subunit head. Binds mRNA in the 70S ribosome, positioning it for translation. The protein is Small ribosomal subunit protein uS3 of Bifidobacterium longum subsp. infantis (strain ATCC 15697 / DSM 20088 / JCM 1222 / NCTC 11817 / S12).